The chain runs to 283 residues: ATP phosphoribosyltransferase (283 aa).

It belongs to the ATP phosphoribosyltransferase family. Long subfamily. The cofactor is Mg(2+).

Its subcellular location is the cytoplasm. The catalysed reaction is 1-(5-phospho-beta-D-ribosyl)-ATP + diphosphate = 5-phospho-alpha-D-ribose 1-diphosphate + ATP. It functions in the pathway amino-acid biosynthesis; L-histidine biosynthesis; L-histidine from 5-phospho-alpha-D-ribose 1-diphosphate: step 1/9. With respect to regulation, feedback inhibited by histidine. Catalyzes the condensation of ATP and 5-phosphoribose 1-diphosphate to form N'-(5'-phosphoribosyl)-ATP (PR-ATP). Has a crucial role in the pathway because the rate of histidine biosynthesis seems to be controlled primarily by regulation of HisG enzymatic activity. The polypeptide is ATP phosphoribosyltransferase (Parabacteroides distasonis (strain ATCC 8503 / DSM 20701 / CIP 104284 / JCM 5825 / NCTC 11152)).